The primary structure comprises 190 residues: CASP-like protein 2U1 (190 aa).

At 1 to 16 (MAFTSLLGSDAERKVA) the chain is on the cytoplasmic side. Residues 17 to 37 (VAEVALRAVLCGLGALAAALV) form a helical membrane-spanning segment. The Extracellular portion of the chain corresponds to 38–59 (ATDTQTRTFFSLQKKATYTDMK). The helical transmembrane segment at 60–80 (AMVLLVAAAAAAAGYSLLQAA) threads the bilayer. The Cytoplasmic portion of the chain corresponds to 81-100 (RCCCCVALLRTSIRPRARLL). The helical transmembrane segment at 101–121 (LAWCVFACDQALAYALLAAVV) threads the bilayer. At 122–152 (AALQASVVAKQGLPQLQWMAICALYGAFCRQ) the chain is on the extracellular side. A helical membrane pass occupies residues 153–173 (AGAGVACAVAAAVDAALLAFL). The Cytoplasmic portion of the chain corresponds to 174–190 (SAFNLFRLYGAKATTTT).

Belongs to the Casparian strip membrane proteins (CASP) family. In terms of assembly, homodimer and heterodimers.

The protein resides in the cell membrane. The chain is CASP-like protein 2U1 from Zea mays (Maize).